A 469-amino-acid polypeptide reads, in one-letter code: Phenylalanine--tRNA ligase alpha subunit (469 aa).

L-phenylalanine-binding positions include Thr-309, 348 to 350 (QLD), and Phe-388. Residue Glu-390 participates in Mg(2+) binding.

It belongs to the class-II aminoacyl-tRNA synthetase family. Phe-tRNA synthetase alpha subunit type 2 subfamily. In terms of assembly, tetramer of two alpha and two beta subunits. The cofactor is Mg(2+).

It localises to the cytoplasm. The catalysed reaction is tRNA(Phe) + L-phenylalanine + ATP = L-phenylalanyl-tRNA(Phe) + AMP + diphosphate + H(+). The protein is Phenylalanine--tRNA ligase alpha subunit of Sulfurisphaera tokodaii (strain DSM 16993 / JCM 10545 / NBRC 100140 / 7) (Sulfolobus tokodaii).